The sequence spans 164 residues: Disulfide bond formation protein B (164 aa).

Residues 1-4 are Cytoplasmic-facing; that stretch reads MRII. A helical transmembrane segment spans residues 5-21; sequence FLLIALICAGLVSYALY. The Periplasmic portion of the chain corresponds to 22 to 39; it reads LQLADGLLPCPLCIFQRM. C31 and C34 are disulfide-bonded. Residues 40–56 form a helical membrane-spanning segment; sequence AYWLVGITALFAFIHHP. At 57-62 the chain is on the cytoplasmic side; it reads QRLGRR. Residues 63–80 form a helical membrane-spanning segment; sequence IYCGLIILFSLAGAIVAG. Residues 81-136 lie on the Periplasmic side of the membrane; sequence RQAWLVRFPEAFECGISPEEAFLNELPLARWWPDMFEANGDCTDGTWQFLSLTIPD. C94 and C122 are disulfide-bonded. The chain crosses the membrane as a helical span at residues 137–155; sequence WSLLIFLAFSLIAGLLWRS. At 156-164 the chain is on the cytoplasmic side; it reads RSISSSNLK.

It belongs to the DsbB family.

The protein localises to the cell inner membrane. Its function is as follows. Required for disulfide bond formation in some periplasmic proteins. Acts by oxidizing the DsbA protein. This is Disulfide bond formation protein B from Nitrosomonas europaea (strain ATCC 19718 / CIP 103999 / KCTC 2705 / NBRC 14298).